Consider the following 607-residue polypeptide: Rap1 GTPase-GDP dissociation stimulator 1-B (607 aa).

ARM repeat units follow at residues 79 to 118 (ELMR…NICY), 170 to 211 (DSLQ…NLAE), 347 to 390 (DGNC…NLAI), 391 to 431 (PVVN…MLID), and 479 to 519 (SKDV…LIAA).

Interacts with ralB. Probably interacts with the post-translationally isoprenylated (geranyl-geranylation) forms of ral proteins. Interacts with both GDP-bound and GTP-bound forms of ralA, but interaction is much stronger with ralA-GDP.

The protein localises to the cytoplasm. It is found in the cytosol. The protein resides in the endoplasmic reticulum. It localises to the mitochondrion. Its function is as follows. Stimulates GDP/GTP exchange reaction of a group of small GTP-binding proteins (G proteins) including Rap1a/Rap1b, RhoA, RhoB and KRas, by stimulating the dissociation of GDP from and the subsequent binding of GTP to each small G protein. In Xenopus laevis (African clawed frog), this protein is Rap1 GTPase-GDP dissociation stimulator 1-B (rap1gds1-b).